A 604-amino-acid chain; its full sequence is Sulfite reductase [NADPH] flavoprotein alpha-component (604 aa).

The Flavodoxin-like domain maps to 68–206 (LSIIFASQTG…PAAEWRKQAL (139 aa)). FMN contacts are provided by residues 74-79 (SQTGNA), 121-124 (STNG), and 157-166 (LGDSSYEFFC). Residues 239 to 453 (QNPYTATLLT…VEHNNNFKLP (215 aa)) enclose the FAD-binding FR-type domain. Residues threonine 327, glycine 361, 391–394 (RLYS), 409–411 (TVG), tyrosine 415, and 424–427 (GGAS) each bind FAD. Residues 524-525 (SR), 530-534 (KVYVQ), and aspartate 566 each bind NADP(+). An FAD-binding site is contributed by tyrosine 604.

It belongs to the NADPH-dependent sulphite reductase flavoprotein subunit CysJ family. This sequence in the N-terminal section; belongs to the flavodoxin family. In the C-terminal section; belongs to the flavoprotein pyridine nucleotide cytochrome reductase family. As to quaternary structure, alpha(8)-beta(8). The alpha component is a flavoprotein, the beta component is a hemoprotein. Requires FAD as cofactor. FMN serves as cofactor.

It carries out the reaction hydrogen sulfide + 3 NADP(+) + 3 H2O = sulfite + 3 NADPH + 4 H(+). It functions in the pathway sulfur metabolism; hydrogen sulfide biosynthesis; hydrogen sulfide from sulfite (NADPH route): step 1/1. In terms of biological role, component of the sulfite reductase complex that catalyzes the 6-electron reduction of sulfite to sulfide. This is one of several activities required for the biosynthesis of L-cysteine from sulfate. The flavoprotein component catalyzes the electron flow from NADPH -&gt; FAD -&gt; FMN to the hemoprotein component. The protein is Sulfite reductase [NADPH] flavoprotein alpha-component of Aliivibrio fischeri (strain ATCC 700601 / ES114) (Vibrio fischeri).